Consider the following 325-residue polypeptide: Sulfite dehydrogenase subunit C (325 aa).

8 consecutive transmembrane segments (helical) span residues 5 to 25 (FSVI…LAMV), 43 to 63 (FYAV…GASF), 87 to 107 (EVIV…AHWF), 126 to 146 (LLLG…TAMI), 165 to 185 (FLFL…AYIG), 186 to 206 (NPLV…GLAS), 266 to 286 (VYLV…YLIG), and 290 to 310 (LPII…WSFF).

Belongs to the DmsC family. Forms a heterotrimeric membrane-bound complex composed of a catalytic heterodimer (SoeAB) and a membrane anchor protein (SoeC).

Its subcellular location is the cell inner membrane. Functionally, part of the SoeABC complex that catalyzes the oxidation of sulfite to sulfate. SoeC probably anchors and stabilizes the catalytic subunits. The sequence is that of Sulfite dehydrogenase subunit C from Allochromatium vinosum (strain ATCC 17899 / DSM 180 / NBRC 103801 / NCIMB 10441 / D) (Chromatium vinosum).